Consider the following 137-residue polypeptide: uncharacterized protein (137 aa).

This is an uncharacterized protein from Homo sapiens (Human).